A 114-amino-acid polypeptide reads, in one-letter code: ATP synthase epsilon chain (114 aa).

This sequence belongs to the ATPase epsilon chain family. F-type ATPases have 2 components, CF(1) - the catalytic core - and CF(0) - the membrane proton channel. CF(1) has five subunits: alpha(3), beta(3), gamma(1), delta(1), epsilon(1). CF(0) has three main subunits: a, b and c.

Its subcellular location is the cell membrane. Produces ATP from ADP in the presence of a proton gradient across the membrane. This is ATP synthase epsilon chain from Wolbachia pipientis wMel.